We begin with the raw amino-acid sequence, 200 residues long: Ribonuclease HII (200 aa).

An RNase H type-2 domain is found at 10 to 200; it reads LIEAGCDEAG…LGDGQLNLNF (191 aa). A divalent metal cation is bound by residues aspartate 16, glutamate 17, and aspartate 108.

This sequence belongs to the RNase HII family. Requires Mn(2+) as cofactor. Mg(2+) serves as cofactor.

The protein resides in the cytoplasm. The catalysed reaction is Endonucleolytic cleavage to 5'-phosphomonoester.. Its function is as follows. Endonuclease that specifically degrades the RNA of RNA-DNA hybrids. The sequence is that of Ribonuclease HII from Bacteroides thetaiotaomicron (strain ATCC 29148 / DSM 2079 / JCM 5827 / CCUG 10774 / NCTC 10582 / VPI-5482 / E50).